The chain runs to 378 residues: MAFVEQEELIAIRRQLHQIPEIGLEEKETQAFLLNEIDKMKQPYLQVRTWQTGILVFIEGKNPQKTIGWRADIDGLPIQEEVVSAFQSKRPGFMHACGHDFHMTIGLGVLKELSQQQPDNNFLFLFQPAEENEAGGMLMYEDHAFGEWLPDEFYALHVNPDLPVGTISTRVGTLFAATCEVNITLKGKGGHAAFPHQANDMVLAATNLIQQAQTIVSRNVDPVVGAVVTFGTFHAGTACNVIAEEATLSGTIRTLTAETNEQTQRRIREISEGIAQSFQCEVTVHLDQKGYLPVVNEPACTTNFIEYMSKQATVQFQQAPVAMTGEDFGYLLSKVPGTMFWLGVASPYSLHSAKFEPNEEALLFGVEAVSGFLKSLDN.

D72 is an active-site residue. E131 (proton acceptor) is an active-site residue.

Belongs to the peptidase M20A family. N-acetyldiaminopimelate deacetylase subfamily.

The catalysed reaction is N-acetyl-(2S,6S)-2,6-diaminopimelate + H2O = (2S,6S)-2,6-diaminopimelate + acetate. Its pathway is amino-acid biosynthesis; L-lysine biosynthesis via DAP pathway; LL-2,6-diaminopimelate from (S)-tetrahydrodipicolinate (acetylase route): step 3/3. Functionally, catalyzes the conversion of N-acetyl-diaminopimelate to diaminopimelate and acetate. The chain is N-acetyldiaminopimelate deacetylase from Enterococcus faecalis (strain ATCC 700802 / V583).